The primary structure comprises 351 residues: MEDVMKVKVEEDGIPTAVLPMEGLHDVGPPPFLSKTYEMVEDSSTDQVISWSTTRNSFIVWDSHKFSTTLLPRFFKHSNFSSFIRQLNTYGFRKVDPDRWEFANEGFLGGQKHLLKTIKRRRNVGQSMNQQGSGACIEIGYYGMEEELERLKRDKNVLMTEIVKLRQQQQSTRNQIIAMGEKIETQERKQVQMMSFLAKIFSNPTFLQQYLDKQVHRKDKQRIEVGQKRRLTMTPSVTGSDQPMNYSSSLQESEAELASIEMLFSAAMDNESSSNVRPDSVVTANGTDMEPVADDIWEELLSEDLISGDRAAEEVVVVEQPEFDVEVEDLVVKTPEWGEELQDLVDQLGFL.

The DNA-binding element occupies 29 to 123 (PPPFLSKTYE…LLKTIKRRRN (95 aa)).

The protein belongs to the HSF family. Homotrimer. Post-translationally, exhibits temperature-dependent phosphorylation.

It is found in the nucleus. DNA-binding protein that specifically binds heat shock promoter elements (HSE) and activates transcription. This chain is Heat shock factor protein HSF30 (HSF30), found in Solanum peruvianum (Peruvian tomato).